The chain runs to 443 residues: Tol-Pal system protein TolB (443 aa).

An N-terminal signal peptide occupies residues 1 to 31 (MTRLAKGKWRSTLGAMMALAVMVAAIPQARA). Polar residues predominate over residues 423 to 432 (NERQISTPTE). Positions 423 to 443 (NERQISTPTEASDPAWSPLLP) are disordered.

The protein belongs to the TolB family. In terms of assembly, the Tol-Pal system is composed of five core proteins: the inner membrane proteins TolA, TolQ and TolR, the periplasmic protein TolB and the outer membrane protein Pal. They form a network linking the inner and outer membranes and the peptidoglycan layer.

It localises to the periplasm. Part of the Tol-Pal system, which plays a role in outer membrane invagination during cell division and is important for maintaining outer membrane integrity. The chain is Tol-Pal system protein TolB from Rhodospirillum rubrum (strain ATCC 11170 / ATH 1.1.1 / DSM 467 / LMG 4362 / NCIMB 8255 / S1).